The sequence spans 204 residues: Uracil-DNA glycosylase (204 aa).

Asp47 serves as the catalytic Proton acceptor.

The protein belongs to the uracil-DNA glycosylase (UDG) superfamily. UNG family.

Its subcellular location is the host nucleus. The enzyme catalyses Hydrolyzes single-stranded DNA or mismatched double-stranded DNA and polynucleotides, releasing free uracil.. Excises uracil residues from the DNA which can arise as a result of misincorporation of dUMP residues by DNA polymerase or deamination of cytosines. Therefore may reduce deleterious uracil incorporation into the viral genome, particularly in terminally differentiated cells which lack DNA repair enzymes. The protein is Uracil-DNA glycosylase (UL2) of Bos taurus (Bovine).